The chain runs to 334 residues: Putative violet-sensitive opsin (334 aa).

Residues 1–29 (MGKYFYLYENISKVGPYDGPQYYLAPTWA) lie on the Extracellular side of the membrane. The N-linked (GlcNAc...) asparagine glycan is linked to N10. The helical transmembrane segment at 30 to 54 (FYLQAAFMGFVFFVGTPLNFVVLLA) threads the bilayer. The Cytoplasmic portion of the chain corresponds to 55-66 (TAKYKKLRVPLN). Residues 67-88 (YILVNITFAGFIFVTFSVSQVF) form a helical membrane-spanning segment. Topologically, residues 89–106 (LASVRGYYFFGQTLCALE) are extracellular. C103 and C179 are oxidised to a cystine. A helical membrane pass occupies residues 107-126 (AAVGAVAGLVTSWSLAVLSF). The Cytoplasmic segment spans residues 127-145 (ERYLVICKPFGAFKFGSNH). A helical transmembrane segment spans residues 146-168 (ALAAVIFTWFMGVVRCPPFFGWS). The Extracellular portion of the chain corresponds to 169-194 (RYIPEGLGCSCGPDWYTNCEEFSCAS). Residues 195-222 (YSKFLLVTCFICPITIIIFSYSQLLGAL) form a helical membrane-spanning segment. Residues 223–244 (RAVAAQQAESASTQKAEKEVSR) are Cytoplasmic-facing. The chain crosses the membrane as a helical span at residues 245 to 272 (MIIVMVASFVTCYGPYALTAQYYAYSQD). Over 273 to 279 (ENKDYRL) the chain is Extracellular. The helical transmembrane segment at 280–301 (VTIPAFFSKSSCVYNPLIYAFM) threads the bilayer. The residue at position 288 (K288) is an N6-(retinylidene)lysine. The Cytoplasmic segment spans residues 302 to 334 (NKQFNGCIMEMVFGKKMEEASEVSSKTEVSTDS).

It belongs to the G-protein coupled receptor 1 family. Opsin subfamily. Phosphorylated on some or all of the serine and threonine residues present in the C-terminal region. In terms of tissue distribution, the three color pigments are found in the cone photoreceptor cells.

It is found in the membrane. Its function is as follows. Visual pigments are the light-absorbing molecules that mediate vision. They consist of an apoprotein, opsin, covalently linked to cis-retinal. The sequence is that of Putative violet-sensitive opsin from Oryzias latipes (Japanese rice fish).